The following is a 363-amino-acid chain: Probable dual-specificity RNA methyltransferase RlmN (363 aa).

The Proton acceptor role is filled by Glu106. Residues 112–345 (HEYGNSVCVT…VTIRREQGHD (234 aa)) form the Radical SAM core domain. The cysteines at positions 119 and 350 are disulfide-linked. [4Fe-4S] cluster is bound by residues Cys126, Cys130, and Cys133. S-adenosyl-L-methionine is bound by residues 176 to 177 (GE), Ser208, 231 to 233 (SLH), and Asn307. Residue Cys350 is the S-methylcysteine intermediate of the active site.

The protein belongs to the radical SAM superfamily. RlmN family. The cofactor is [4Fe-4S] cluster.

It localises to the cytoplasm. The enzyme catalyses adenosine(2503) in 23S rRNA + 2 reduced [2Fe-2S]-[ferredoxin] + 2 S-adenosyl-L-methionine = 2-methyladenosine(2503) in 23S rRNA + 5'-deoxyadenosine + L-methionine + 2 oxidized [2Fe-2S]-[ferredoxin] + S-adenosyl-L-homocysteine. It carries out the reaction adenosine(37) in tRNA + 2 reduced [2Fe-2S]-[ferredoxin] + 2 S-adenosyl-L-methionine = 2-methyladenosine(37) in tRNA + 5'-deoxyadenosine + L-methionine + 2 oxidized [2Fe-2S]-[ferredoxin] + S-adenosyl-L-homocysteine. In terms of biological role, specifically methylates position 2 of adenine 2503 in 23S rRNA and position 2 of adenine 37 in tRNAs. The sequence is that of Probable dual-specificity RNA methyltransferase RlmN from Bacillus subtilis (strain 168).